The chain runs to 285 residues: MTNHDLASLSQTIETAFEDREAVSTSTRGAIRDAVEAALNLLDSGKVRVAERGADGTWTVNQWLKKAVLLSFRLNPMELVKGGPGESVWWDKVASKFDGWSVNEFEKAGFRAVPNCVVRRSAYIAPNAILMPSFVNLGAYVGEGTMVDTWATVGSCAQIGKNVHLSGGVGIGGVLEPMQAGPTIIEDNCFIGARSEVVEGCIVREGSVLGMGVFIGKSTKIVDRATGEVTYGEVPPYSVVVAGSMPSGSTMANGQPAPNLYCAVIVKRVDEKTRSKTGINELLRD.

Positions 111 and 148 each coordinate substrate.

This sequence belongs to the transferase hexapeptide repeat family. Homotrimer.

The protein resides in the cytoplasm. The enzyme catalyses (S)-2,3,4,5-tetrahydrodipicolinate + succinyl-CoA + H2O = (S)-2-succinylamino-6-oxoheptanedioate + CoA. Its pathway is amino-acid biosynthesis; L-lysine biosynthesis via DAP pathway; LL-2,6-diaminopimelate from (S)-tetrahydrodipicolinate (succinylase route): step 1/3. This chain is 2,3,4,5-tetrahydropyridine-2,6-dicarboxylate N-succinyltransferase, found in Sinorhizobium fredii (strain NBRC 101917 / NGR234).